Consider the following 143-residue polypeptide: Large ribosomal subunit protein uL11 (143 aa).

The protein belongs to the universal ribosomal protein uL11 family. As to quaternary structure, part of the ribosomal stalk of the 50S ribosomal subunit. Interacts with L10 and the large rRNA to form the base of the stalk. L10 forms an elongated spine to which L12 dimers bind in a sequential fashion forming a multimeric L10(L12)X complex. One or more lysine residues are methylated.

Forms part of the ribosomal stalk which helps the ribosome interact with GTP-bound translation factors. The protein is Large ribosomal subunit protein uL11 of Cupriavidus metallidurans (strain ATCC 43123 / DSM 2839 / NBRC 102507 / CH34) (Ralstonia metallidurans).